The primary structure comprises 225 residues: Peptidyl-tRNA hydrolase (225 aa).

A tRNA-binding site is contributed by Tyr-14. His-19 (proton acceptor) is an active-site residue. 3 residues coordinate tRNA: Phe-64, Asn-66, and Asn-112. The interval 184–225 (ALRMQPPKPEKPKPAAKAPEAQAPEAAPDERSALQKLADRFR) is disordered. Residues 198 to 209 (AAKAPEAQAPEA) show a composition bias toward low complexity. Residues 211–225 (PDERSALQKLADRFR) are compositionally biased toward basic and acidic residues.

It belongs to the PTH family. In terms of assembly, monomer.

It localises to the cytoplasm. It catalyses the reaction an N-acyl-L-alpha-aminoacyl-tRNA + H2O = an N-acyl-L-amino acid + a tRNA + H(+). Its function is as follows. Hydrolyzes ribosome-free peptidyl-tRNAs (with 1 or more amino acids incorporated), which drop off the ribosome during protein synthesis, or as a result of ribosome stalling. Functionally, catalyzes the release of premature peptidyl moieties from peptidyl-tRNA molecules trapped in stalled 50S ribosomal subunits, and thus maintains levels of free tRNAs and 50S ribosomes. The sequence is that of Peptidyl-tRNA hydrolase from Cereibacter sphaeroides (strain ATCC 17023 / DSM 158 / JCM 6121 / CCUG 31486 / LMG 2827 / NBRC 12203 / NCIMB 8253 / ATH 2.4.1.) (Rhodobacter sphaeroides).